Reading from the N-terminus, the 87-residue chain is Beta-toxin Ct1a (87 aa).

Positions 1–19 are cleaved as a signal peptide; the sequence is MNSLLMITACLALIGTVWA. The region spanning 20–85 is the LCN-type CS-alpha/beta domain; sequence KEGYLVNHST…VWPLPKKTCN (66 aa). 4 disulfides stabilise this stretch: Cys31/Cys84, Cys35/Cys60, Cys44/Cys65, and Cys48/Cys67. An Asparagine amide modification is found at Asn85.

Belongs to the long (4 C-C) scorpion toxin superfamily. Sodium channel inhibitor family. Beta subfamily. Expressed by the venom gland.

The protein resides in the secreted. Its function is as follows. Beta toxins bind voltage-independently at site-4 of sodium channels (Nav) and shift the voltage of activation toward more negative potentials thereby affecting sodium channel activation and promoting spontaneous and repetitive firing. Is lethal to mice but does not show toxicity to freshwater shrimp and crickets. This is Beta-toxin Ct1a from Centruroides tecomanus (Scorpion).